The following is a 267-amino-acid chain: Thiamine pyrophosphokinase 2 (267 aa).

This sequence belongs to the thiamine pyrophosphokinase family.

Its subcellular location is the cytoplasm. The protein localises to the cytosol. It catalyses the reaction thiamine + ATP = thiamine diphosphate + AMP + H(+). The protein operates within cofactor biosynthesis; thiamine diphosphate biosynthesis; thiamine diphosphate from thiamine: step 1/1. In terms of biological role, catalyzes the phosphorylation of thiamine to thiamine pyrophosphate (TPP). TPP is an active cofactor for enzymes involved in glycolysis and energy production. Plant leaves require high levels of TPP for photosynthesis and carbohydrate metabolism. This is Thiamine pyrophosphokinase 2 (TPK2) from Oryza sativa subsp. japonica (Rice).